Here is a 192-residue protein sequence, read N- to C-terminus: T-cell surface glycoprotein CD3 epsilon chain (192 aa).

A signal peptide spans 1–21 (MQSGNLWRALGLCLLLVGAWA). The Extracellular portion of the chain corresponds to 23–114 (DADEQKPYEV…QNCMEVNLME (92 aa)). An Ig-like domain is found at 26-97 (EQKPYEVSIS…EGNKEAAHTL (72 aa)). A disulfide bridge links C43 with C84. N-linked (GlcNAc...) asparagine glycosylation occurs at N72. The chain crosses the membrane as a helical span at residues 115 to 135 (VATIIVVDICVTLGLLLLVYY). Over 136-192 (WSKSRKAKASPMTRGAGAGGRPRGQNKGRPPPVPNPDYEPIRKGQRDLYAGLNQRGV) the chain is Cytoplasmic. A disordered region spans residues 145–180 (SPMTRGAGAGGRPRGQNKGRPPPVPNPDYEPIRKGQ). The interval 160 to 177 (QNKGRPPPVPNPDYEPIR) is NUMB-binding region. Positions 163–190 (GRPPPVPNPDYEPIRKGQRDLYAGLNQR) constitute an ITAM domain. The tract at residues 164-171 (RPPPVPNP) is proline-rich sequence. Phosphotyrosine occurs at positions 173 and 184.

In terms of assembly, the TCR-CD3 complex is composed of a CD3D/CD3E and a CD3G/CD3E heterodimers that preferentially associate with TCRalpha and TCRbeta, respectively, to form TCRalpha/CD3E/CD3G and TCRbeta/CD3G/CD3E trimers. In turn, the hexamer interacts with CD3Z homodimer to form the TCR-CD3 complex. Alternatively, TCRalpha and TCRbeta can be replaced by TCRgamma and TCRdelta. Interacts with CD6. Interacts (via Proline-rich sequence) with NCK1; the interaction is ligand dependent but independent of tyrosine kinase activation. In terms of processing, phosphorylated on Tyr residues after T-cell receptor triggering by LCK in association with CD4/CD8.

Its subcellular location is the cell membrane. Functionally, part of the TCR-CD3 complex present on T-lymphocyte cell surface that plays an essential role in adaptive immune response. When antigen presenting cells (APCs) activate T-cell receptor (TCR), TCR-mediated signals are transmitted across the cell membrane by the CD3 chains CD3D, CD3E, CD3G and CD3Z. All CD3 chains contain immunoreceptor tyrosine-based activation motifs (ITAMs) in their cytoplasmic domain. Upon TCR engagement, these motifs become phosphorylated by Src family protein tyrosine kinases LCK and FYN, resulting in the activation of downstream signaling pathways. In addition of this role of signal transduction in T-cell activation, CD3E plays an essential role in correct T-cell development. Also participates in internalization and cell surface down-regulation of TCR-CD3 complexes via endocytosis sequences present in CD3E cytosolic region. In addition to its role as a TCR coreceptor, it serves as a receptor for ITPRIPL1. Ligand recognition inhibits T-cell activation by promoting interaction with NCK1, which prevents CD3E-ZAP70 interaction and blocks the ERK-NFkB signaling cascade and calcium influx. The chain is T-cell surface glycoprotein CD3 epsilon chain (CD3E) from Bos taurus (Bovine).